A 300-amino-acid polypeptide reads, in one-letter code: Cation-efflux pump FieF (300 aa).

A run of 4 helical transmembrane segments spans residues 12–32 (AAIA…FAWW), 39–59 (ILAA…NLLV), 82–102 (AALA…LTGI), and 114–134 (PGVG…LVSF). Asp-45 and Asp-49 together coordinate Zn(2+). Residues His-153 and Asp-157 each coordinate Zn(2+). 2 helical membrane passes run 156-176 (SDVM…YGWH) and 178-198 (ADAL…LRMG).

This sequence belongs to the cation diffusion facilitator (CDF) transporter (TC 2.A.4) family. FieF subfamily. As to quaternary structure, homodimer.

Its subcellular location is the cell inner membrane. The enzyme catalyses Zn(2+)(in) + H(+)(out) = Zn(2+)(out) + H(+)(in). It carries out the reaction Cd(2+)(in) + H(+)(out) = Cd(2+)(out) + H(+)(in). The catalysed reaction is Fe(2+)(in) + H(+)(out) = Fe(2+)(out) + H(+)(in). Divalent metal cation transporter which exports Zn(2+), Cd(2+) and possibly Fe(2+). May be involved in zinc and iron detoxification by efflux. The chain is Cation-efflux pump FieF from Shigella flexneri serotype 5b (strain 8401).